Reading from the N-terminus, the 284-residue chain is D-tagatose-1,6-bisphosphate aldolase subunit GatY (284 aa).

Asp82 serves as the catalytic Proton donor. The Zn(2+) site is built by His83 and His180. Gly181 contacts dihydroxyacetone phosphate. A Zn(2+)-binding site is contributed by His208. Dihydroxyacetone phosphate-binding positions include 209–211 (GAS) and 230–233 (NVAT).

Belongs to the class II fructose-bisphosphate aldolase family. TagBP aldolase GatY subfamily. Forms a complex with GatZ. The cofactor is Zn(2+).

It catalyses the reaction D-tagatofuranose 1,6-bisphosphate = D-glyceraldehyde 3-phosphate + dihydroxyacetone phosphate. The protein operates within carbohydrate metabolism; D-tagatose 6-phosphate degradation; D-glyceraldehyde 3-phosphate and glycerone phosphate from D-tagatose 6-phosphate: step 2/2. Functionally, catalytic subunit of the tagatose-1,6-bisphosphate aldolase GatYZ, which catalyzes the reversible aldol condensation of dihydroxyacetone phosphate (DHAP or glycerone-phosphate) with glyceraldehyde 3-phosphate (G3P) to produce tagatose 1,6-bisphosphate (TBP). Requires GatZ subunit for full activity and stability. Is involved in the catabolism of galactitol. The sequence is that of D-tagatose-1,6-bisphosphate aldolase subunit GatY from Escherichia coli (strain 55989 / EAEC).